Reading from the N-terminus, the 408-residue chain is Peptidase T (408 aa).

His78 contributes to the Zn(2+) binding site. The active site involves Asp80. Residue Asp140 participates in Zn(2+) binding. Glu173 functions as the Proton acceptor in the catalytic mechanism. Residues Glu174, Asp196, and His379 each contribute to the Zn(2+) site.

The protein belongs to the peptidase M20B family. Requires Zn(2+) as cofactor.

The protein resides in the cytoplasm. It catalyses the reaction Release of the N-terminal residue from a tripeptide.. Functionally, cleaves the N-terminal amino acid of tripeptides. The sequence is that of Peptidase T from Escherichia fergusonii (strain ATCC 35469 / DSM 13698 / CCUG 18766 / IAM 14443 / JCM 21226 / LMG 7866 / NBRC 102419 / NCTC 12128 / CDC 0568-73).